We begin with the raw amino-acid sequence, 123 residues long: UPF0102 protein PSEEN4497 (123 aa).

It belongs to the UPF0102 family.

This is UPF0102 protein PSEEN4497 from Pseudomonas entomophila (strain L48).